A 113-amino-acid polypeptide reads, in one-letter code: U11-theraphotoxin-Hhn1k (113 aa).

The N-terminal stretch at 1-21 (MNTVRVTFLLVFVLAVSLGQA) is a signal peptide. The propeptide occupies 22–74 (DKDENRMEMQEKTEQGKSYLDFAENLLLQKLEELEAKLLEEDSEESRNSRQKR). The segment at 61–83 (EEDSEESRNSRQKRCIGEGVPCD) is disordered. Intrachain disulfides connect cysteine 75–cysteine 90, cysteine 82–cysteine 95, and cysteine 89–cysteine 110.

It belongs to the neurotoxin 14 (magi-1) family. 01 (HNTX-16) subfamily. As to expression, expressed by the venom gland.

Its subcellular location is the secreted. In terms of biological role, probable ion channel inhibitor. The sequence is that of U11-theraphotoxin-Hhn1k from Cyriopagopus hainanus (Chinese bird spider).